The primary structure comprises 968 residues: RNA polymerase-associated protein RapA (968 aa).

A Helicase ATP-binding domain is found at 164–334 (DVGRRHAPRV…FARLRLLDPN (171 aa)). 177–184 (DEVGLGKT) contacts ATP. A DEAH box motif is present at residues 280–283 (DEAH). Residues 490 to 644 (RVEWLMGYLT…TCPTGRTIYD (155 aa)) form the Helicase C-terminal domain.

This sequence belongs to the SNF2/RAD54 helicase family. RapA subfamily. In terms of assembly, interacts with the RNAP. Has a higher affinity for the core RNAP than for the holoenzyme. Its ATPase activity is stimulated by binding to RNAP.

Its function is as follows. Transcription regulator that activates transcription by stimulating RNA polymerase (RNAP) recycling in case of stress conditions such as supercoiled DNA or high salt concentrations. Probably acts by releasing the RNAP, when it is trapped or immobilized on tightly supercoiled DNA. Does not activate transcription on linear DNA. Probably not involved in DNA repair. This is RNA polymerase-associated protein RapA from Enterobacter sp. (strain 638).